The following is a 149-amino-acid chain: Pleckstrin homology domain-containing family J member 1 (149 aa).

Positions 15 to 108 (PAEMAAELGM…WMAALRQASY (94 aa)) constitute a PH domain.

The polypeptide is Pleckstrin homology domain-containing family J member 1 (PLEKHJ1) (Bos taurus (Bovine)).